The sequence spans 206 residues: Interleukin-24 (206 aa).

The signal sequence occupies residues 1-51 (MNFQQRLQSLWTLARPFCPPLLATASQMQMVVLPCLGFTLLLWSQVSGAQG). An intrachain disulfide couples C59 to C106. N85 and N99 each carry an N-linked (GlcNAc...) asparagine glycan. Residue K122 forms a Glycyl lysine isopeptide (Lys-Gly) (interchain with G-Cter in ubiquitin) linkage. The N-linked (GlcNAc...) asparagine glycan is linked to N126.

Belongs to the IL-10 family. Glycosylated. In terms of processing, ubiquitination at Lys-122 promotes proteasomal degradation. As to expression, up-regulated in melanoma cells induced to terminally differentiate.

Its subcellular location is the secreted. Its function is as follows. Multifunctional cytokine mainly produced by T-cells that plays a regulatory role in immune response, tissue homeostasis, host defense, and oncogenesis. Possesses antiviral functions and induces the type I interferon response during influenza infection. Signals through two receptor complexes IL20RA/IL20RB or IL20RB/IL22RA1. In turn, stimulates the JAK1-STAT3 and MAPK pathways and promotes the secretion of pro-inflammatory mediators including IL8 and MMP1. Intracellularly, maintains endoplasmic reticulum homeostasis by restricting the eIF2alpha-CHOP pathway-mediated stress signal. In addition, acts as a quality control mechanism for the ubiquitin proteasome system by alerting the cell to proteasome dysfunction through activation of PKR/EIF2AK2. The polypeptide is Interleukin-24 (IL24) (Homo sapiens (Human)).